Reading from the N-terminus, the 229-residue chain is Putative N-acetylmannosamine-6-phosphate 2-epimerase 2 (229 aa).

It belongs to the NanE family.

The enzyme catalyses an N-acyl-D-glucosamine 6-phosphate = an N-acyl-D-mannosamine 6-phosphate. It functions in the pathway amino-sugar metabolism; N-acetylneuraminate degradation; D-fructose 6-phosphate from N-acetylneuraminate: step 3/5. Functionally, converts N-acetylmannosamine-6-phosphate (ManNAc-6-P) to N-acetylglucosamine-6-phosphate (GlcNAc-6-P). This is Putative N-acetylmannosamine-6-phosphate 2-epimerase 2 from Salmonella paratyphi A (strain ATCC 9150 / SARB42).